We begin with the raw amino-acid sequence, 355 residues long: Elongation factor Ts (355 aa).

The involved in Mg(2+) ion dislocation from EF-Tu stretch occupies residues 82–85 (TDFV).

This sequence belongs to the EF-Ts family.

It localises to the cytoplasm. Functionally, associates with the EF-Tu.GDP complex and induces the exchange of GDP to GTP. It remains bound to the aminoacyl-tRNA.EF-Tu.GTP complex up to the GTP hydrolysis stage on the ribosome. The chain is Elongation factor Ts from Helicobacter acinonychis (strain Sheeba).